Here is a 178-residue protein sequence, read N- to C-terminus: MSSFSRAPQQWATFARIWYLLDGKMQPPGKLAAMASIRLQGLHKPVYHALSDCGDHVVIMNTRHIAFSGNKWEQKVYSSHTGYPGGFRQVTAAQLHLRDPVAIVKLAIYGMLPKNLHRRTMMERLHLFPDEYIPEDILKNLVEELPQPRKIPKRLDEYTQEEIDAFPRLWTPPEDYRL.

S2 is subject to N-acetylserine.

The protein belongs to the universal ribosomal protein uL13 family. As to quaternary structure, component of the mitochondrial large ribosomal subunit (mt-LSU). Mature mammalian 55S mitochondrial ribosomes consist of a small (28S) and a large (39S) subunit. The 28S small subunit contains a 12S ribosomal RNA (12S mt-rRNA) and 30 different proteins. The 39S large subunit contains a 16S rRNA (16S mt-rRNA), a copy of mitochondrial valine transfer RNA (mt-tRNA(Val)), which plays an integral structural role, and 52 different proteins. Interacts with OXA1L.

It is found in the mitochondrion. The protein is Large ribosomal subunit protein uL13m (MRPL13) of Homo sapiens (Human).